The primary structure comprises 423 residues: Nucleoporin NUP42 (423 aa).

Residues 1 to 25 form a C3H1-type zinc finger; it reads MAICQFFLQGRCRFGDRCWNEHPGA. Residues 14–15 form an FG 1 repeat; the sequence is FG. Residues 24–85 form a disordered region; that stretch reads GARGAGGGRQ…EKPYFSSFDS (62 aa). Residues 40–69 show a composition bias toward polar residues; that stretch reads SGNNRRGWNTTSQRYSNVIQPSSFSKSTPW. The interaction with HIV-1 Vpr stretch occupies residues 94-170; sequence GFGLSENPFA…EYHNFLTSNN (77 aa). Residues 95 to 96 form an FG 2 repeat; that stretch reads FG. The residue at position 106 (serine 106) is a Phosphoserine. FG repeat units lie at residues 218–219, 220–221, 265–266, 271–272, 288–289, 290–291, 311–312, 336–337, 345–346, and 364–365; these read FG. Positions 365–423 are interaction with GLE1; it reads GNSSISTSLSASSSIIATDNVLFTPRDKLTVEELEQFQSKKFTLGKIPLKPPPLELLNV.

As to quaternary structure, probable component of the nuclear pore complex (NPC). Interacts with nuclear export protein NXF1. Interacts with GLE1. Able to form a heterotrimer with NUP155 and GLE1 in vitro. Interacts with XPO1. (Microbial infection) Interacts with the HIV-1 virus proteins Rev and Vpr. The interaction with HIV-1 Rev, a protein that mediates nuclear export of unspliced viral RNAs, suggests that its function may be bypassed by the HIV-1 virus. O-glycosylated. Ubiquitously expressed.

Its subcellular location is the nucleus. It is found in the nuclear pore complex. The protein resides in the nucleus membrane. Functionally, required for the export of mRNAs containing poly(A) tails from the nucleus into the cytoplasm. (Microbial infection) In case of infection by HIV-1, it may participate in the docking of viral Vpr at the nuclear envelope. The protein is Nucleoporin NUP42 of Homo sapiens (Human).